Consider the following 75-residue polypeptide: UPF0346 protein LGAS_0911 (75 aa).

It belongs to the UPF0346 family.

This Lactobacillus gasseri (strain ATCC 33323 / DSM 20243 / BCRC 14619 / CIP 102991 / JCM 1131 / KCTC 3163 / NCIMB 11718 / NCTC 13722 / AM63) protein is UPF0346 protein LGAS_0911.